The chain runs to 95 residues: F(1)-ATPase inhibitor IF(1), mitochondrial (95 aa).

The transit peptide at 1-25 (MLRTTVSKLARPTVSRAFATTSRAL) directs the protein to the mitochondrion. Disordered regions lie at residues 20 to 48 (TTSRALAGETGAPPKTGGPGDAFQRREKA) and 76 to 95 (LKTLSDHIDEITREQGGERN).

It belongs to the ATPase inhibitor family. As to quaternary structure, associates with the mitochondrial small ribosomal subunit (mt-SSU). IF(1) coiled-coil forms a helical bundle with the C-terminal extension of uS17m and also binds to mS27 in the mtSSU tail. Since the C-terminal extension of uS17m stabilizing the IF(1) on the mt-SSU is specific to N.crassa, IF(1) binding might also be specific.

The protein localises to the mitochondrion. Endogenous F(1)F(0)-ATPase inhibitor limiting ATP depletion when the mitochondrial membrane potential falls below a threshold and the F(1)F(0)-ATP synthase starts hydrolyzing ATP to pump protons out of the mitochondrial matrix. Required to avoid the consumption of cellular ATP when the F(1)F(0)-ATP synthase enzyme acts as an ATP hydrolase. Functions through inserting its N-terminal part into the catalytically active F1-ATPase, thereby blocking its rotational movement and subsequently the ATP hydrolase activity. The chain is F(1)-ATPase inhibitor IF(1), mitochondrial (inh1) from Neurospora crassa (strain ATCC 24698 / 74-OR23-1A / CBS 708.71 / DSM 1257 / FGSC 987).